Reading from the N-terminus, the 213-residue chain is Orotate phosphoribosyltransferase (213 aa).

Lys-26 is a 5-phospho-alpha-D-ribose 1-diphosphate binding site. 34–35 contributes to the orotate binding site; the sequence is FF. Residues 72–73, Arg-99, Lys-100, Lys-103, His-105, and 124–132 each bind 5-phospho-alpha-D-ribose 1-diphosphate; these read YK and DDVITAGTA. Orotate contacts are provided by Thr-128 and Arg-156.

This sequence belongs to the purine/pyrimidine phosphoribosyltransferase family. PyrE subfamily. In terms of assembly, homodimer. Requires Mg(2+) as cofactor.

The enzyme catalyses orotidine 5'-phosphate + diphosphate = orotate + 5-phospho-alpha-D-ribose 1-diphosphate. The protein operates within pyrimidine metabolism; UMP biosynthesis via de novo pathway; UMP from orotate: step 1/2. Catalyzes the transfer of a ribosyl phosphate group from 5-phosphoribose 1-diphosphate to orotate, leading to the formation of orotidine monophosphate (OMP). The polypeptide is Orotate phosphoribosyltransferase (Pseudomonas savastanoi pv. phaseolicola (strain 1448A / Race 6) (Pseudomonas syringae pv. phaseolicola (strain 1448A / Race 6))).